Here is a 370-residue protein sequence, read N- to C-terminus: Phosphoserine aminotransferase (370 aa).

The residue at position 1 (Met-1) is an N-acetylmethionine. O-phospho-L-serine is bound by residues His-44 and Arg-45. Residue Lys-51 is modified to N6-acetyllysine. Residues Gly-79, Cys-80, and Trp-107 each contribute to the pyridoxal 5'-phosphate site. Position 127 is an N6-acetyllysine (Lys-127). Pyridoxal 5'-phosphate-binding residues include Thr-156, Asp-176, and Gln-199. At Lys-200 the chain carries N6-(pyridoxal phosphate)lysine. Residues Asn-241 and Thr-242 each coordinate pyridoxal 5'-phosphate. 3 positions are modified to N6-acetyllysine: Lys-269, Lys-318, and Lys-323. Ser-331 is modified (phosphoserine). Lys-333 bears the N6-acetyllysine mark. 3 residues coordinate O-phospho-L-serine: His-335, Arg-336, and Arg-342.

The protein belongs to the class-V pyridoxal-phosphate-dependent aminotransferase family. SerC subfamily. Homodimer. The cofactor is pyridoxal 5'-phosphate. Expressed at high levels in the brain, liver, kidney and pancreas, and very weakly expressed in the thymus, prostate, testis and colon.

It catalyses the reaction O-phospho-L-serine + 2-oxoglutarate = 3-phosphooxypyruvate + L-glutamate. Its pathway is amino-acid biosynthesis; L-serine biosynthesis; L-serine from 3-phospho-D-glycerate: step 2/3. Its activity is regulated as follows. Phosphoserine transaminase activity is strongly stimulated by increasing the ionic strength. Functionally, involved in L-serine biosynthesis via the phosphorylated pathway, a three-step pathway converting the glycolytic intermediate 3-phospho-D-glycerate into L-serine. Catalyzes the second step, that is the pyridoxal 5'-phosphate-dependent transamination of 3-phosphohydroxypyruvate and L-glutamate to O-phosphoserine (OPS) and alpha-ketoglutarate. This Homo sapiens (Human) protein is Phosphoserine aminotransferase.